The following is a 478-amino-acid chain: FERM domain-containing protein B (478 aa).

Disordered stretches follow at residues 19 to 39 (ELIP…TITS), 129 to 196 (EENS…GFLT), and 202 to 221 (KAQS…TIAS). Composition is skewed to low complexity over residues 22–39 (PTQS…TITS) and 129–164 (EENS…ANDG). The FERM domain maps to 48-468 (VLIRIYFIDD…DWSEEWESKE (421 aa)). Residues 165 to 179 (SGSGSGSGSGSGSGS) show a composition bias toward gly residues. 2 stretches are compositionally biased toward low complexity: residues 180-189 (GTSTPNSPKG) and 204-216 (QSPQ…SSLS).

The sequence is that of FERM domain-containing protein B (frmB) from Dictyostelium discoideum (Social amoeba).